Here is a 116-residue protein sequence, read N- to C-terminus: L-amino-acid oxidase BjussuLAAO-II (116 aa).

Residue 42–45 coordinates FAD; that stretch reads GPMR. Substrate contacts are provided by arginine 45 and histidine 78.

Belongs to the flavin monoamine oxidase family. FIG1 subfamily. In terms of assembly, homodimer; non-covalently linked. FAD serves as cofactor. In terms of processing, glycosylated. In terms of tissue distribution, expressed by the venom gland.

It localises to the secreted. The catalysed reaction is an L-alpha-amino acid + O2 + H2O = a 2-oxocarboxylate + H2O2 + NH4(+). The enzyme catalyses L-leucine + O2 + H2O = 4-methyl-2-oxopentanoate + H2O2 + NH4(+). It catalyses the reaction L-phenylalanine + O2 + H2O = 3-phenylpyruvate + H2O2 + NH4(+). It carries out the reaction L-methionine + O2 + H2O = 4-methylsulfanyl-2-oxobutanoate + H2O2 + NH4(+). The catalysed reaction is L-isoleucine + O2 + H2O = (S)-3-methyl-2-oxopentanoate + H2O2 + NH4(+). The enzyme catalyses L-histidine + O2 + H2O = 3-(imidazol-5-yl)pyruvate + H2O2 + NH4(+). It catalyses the reaction L-tyrosine + O2 + H2O = 3-(4-hydroxyphenyl)pyruvate + H2O2 + NH4(+). It carries out the reaction L-tryptophan + O2 + H2O = indole-3-pyruvate + H2O2 + NH4(+). With respect to regulation, its enzymatic activities is reduced by the presence of Zn(2+), Al(3+), Cu(2+), Na(+) or Ni(2+) salts. Its function is as follows. Catalyzes an oxidative deamination of predominantly hydrophobic and aromatic L-amino acids, thus producing hydrogen peroxide that may contribute to the diverse toxic effects of this enzyme. Shows very high enzymatic activity on L-Met and L-Leu, high activity on L-Ile, L-Phe and L-Tyr and moderate activity on L-His. Exhibits diverse biological activities, such as hemorrhage, hemolysis, edema, apoptosis of vascular endothelial cells or tumor cell lines, and antibacterial, as well as regulation of platelet aggregation. Effects of snake L-amino oxidases on platelets are controversial, since they either induce aggregation or inhibit agonist-induced aggregation. These different effects are probably due to different experimental conditions. In vitro, has a strong antiprotozoal effect against Leishmania amazonensis (IC(50)=4.56 ug/mL) and Trypanosoma cruzi (IC(50)=4.85 ug/mL). It also causes cell death and DNA damage in hepatocarcinoma cells (HepG2) in vitro by inducing oxidative stress. It exerts cytotoxicity towards colorectal adenocarcinomahuman cells (Caco-2) by acting on multiple intracellular targets. It diminishes cell viability by decreasing mitochondrial activity, the activity of acid phosphatases, and lysosomal function. In addition, it increases intracellular levels of reactive oxygen species and DNA damage, it elevates the expression of the pro-inflammatory cytokine genes TNF and IL6, and lowers the expression of the apoptotic-related genes. Also induces cytotoxicity (IC(50)=1.80 ug/mL) and apoptosis in MCF-7 cells (a human breast adeno-carcinoma cell line) by activating the intrinsic and extrinsic apoptosis pathways, but are not cytotoxic towards MCF-10A cells (a non-tumorigenic human breast epithelial cell line). The polypeptide is L-amino-acid oxidase BjussuLAAO-II (Bothrops jararacussu (Jararacussu)).